Here is a 222-residue protein sequence, read N- to C-terminus: uncharacterized protein (222 aa).

Asparagine 4, asparagine 75, asparagine 84, asparagine 104, asparagine 170, and asparagine 175 each carry an N-linked (GlcNAc...) asparagine; by host glycan. A helical membrane pass occupies residues 200-220; that stretch reads LIIIIGIVIILLLIIVMIKTV.

It is found in the membrane. This is an uncharacterized protein from Acanthamoeba polyphaga (Amoeba).